A 271-amino-acid polypeptide reads, in one-letter code: Ferric vulnibactin reductase VuuB (271 aa).

Positions 8-131 (VYPMLLDFVR…IGPAGPDPLI (124 aa)) constitute an FAD-binding FR-type domain.

This sequence belongs to the SIP oxidoreductase family. Monomer. The cofactor is FAD.

It localises to the cytoplasm. The enzyme catalyses 2 a Fe(II)-siderophore + NAD(+) + H(+) = 2 a Fe(III)-siderophore + NADH. Its function is as follows. Ferric-siderophore reductase involved in iron removal from the siderophores after their transport into the cell. Acts as a major ferric-vulnibactin reductase catalyzing the reduction of Fe(3+)-vulnibactin, a catecholate siderophore synthesized by V.vulnificus. Catalyzes reduction of Fe(3+)-aerobactin, a citrate-hydroxamate siderophore produced by other bacteria, in the absence of IutB. Catalyzes reduction of Fe(3+)-vibriobactin in vitro. No activity with ferrioxamine B or Fe(3+)-enterobactin. Catalyzes reduction of ferric chelating compounds Fe(3+)-nitrilotriacetic acid (NTA), Fe(3+)-citrate and Fe(3+)-EDTA as well as non-complexed FeCl3 in the presence of NADH as its electron donor and FAD as its cofactor in vitro. Highest activity with Fe(3+)-NTA as electron acceptor. The protein is Ferric vulnibactin reductase VuuB of Vibrio vulnificus.